The following is a 79-amino-acid chain: uncharacterized protein (79 aa).

Residues 1-27 (MRQRGQEHLPTSVKSEPRACNNPTVAE) are disordered.

This is an uncharacterized protein from Homo sapiens (Human).